The chain runs to 89 residues: Small ribosomal subunit protein uS14A (89 aa).

This sequence belongs to the universal ribosomal protein uS14 family. As to quaternary structure, part of the 30S ribosomal subunit. Contacts proteins S3 and S10.

Binds 16S rRNA, required for the assembly of 30S particles and may also be responsible for determining the conformation of the 16S rRNA at the A site. The protein is Small ribosomal subunit protein uS14A of Limosilactobacillus reuteri (strain DSM 20016) (Lactobacillus reuteri).